Reading from the N-terminus, the 334-residue chain is tRNA-dihydrouridine synthase B (334 aa).

FMN-binding positions include 16 to 18 (PMA) and Q70. C100 functions as the Proton donor in the catalytic mechanism. FMN contacts are provided by residues K139, 200-202 (NGD), and 224-225 (GR).

This sequence belongs to the Dus family. DusB subfamily. Requires FMN as cofactor.

The enzyme catalyses a 5,6-dihydrouridine in tRNA + NAD(+) = a uridine in tRNA + NADH + H(+). The catalysed reaction is a 5,6-dihydrouridine in tRNA + NADP(+) = a uridine in tRNA + NADPH + H(+). Functionally, catalyzes the synthesis of 5,6-dihydrouridine (D), a modified base found in the D-loop of most tRNAs, via the reduction of the C5-C6 double bond in target uridines. This Serratia marcescens protein is tRNA-dihydrouridine synthase B.